The primary structure comprises 307 residues: D-alanine--D-alanine ligase (307 aa).

Residues 105–304 enclose the ATP-grasp domain; it reads KMLWKGFGLP…FEQLVVKILE (200 aa). 135-190 contacts ATP; it reads VERLGLPLMVKPSREGSSVGLTKVNAVEELKNAVDLALTHDDTVLIEEWLSGIEMT. Mg(2+)-binding residues include Asp258, Glu271, and Asn273.

It belongs to the D-alanine--D-alanine ligase family. Requires Mg(2+) as cofactor. Mn(2+) is required as a cofactor.

It localises to the cytoplasm. It catalyses the reaction 2 D-alanine + ATP = D-alanyl-D-alanine + ADP + phosphate + H(+). It functions in the pathway cell wall biogenesis; peptidoglycan biosynthesis. Cell wall formation. The protein is D-alanine--D-alanine ligase of Mannheimia succiniciproducens (strain KCTC 0769BP / MBEL55E).